Reading from the N-terminus, the 196-residue chain is Signal peptidase complex catalytic subunit SEC11 (196 aa).

Residues 1–14 (MLSSLSPYMANPRQ) are Cytoplasmic-facing. The chain crosses the membrane as a helical; Signal-anchor for type II membrane protein span at residues 15–33 (TFTQVLNFALVLSTAFMLW). Over 34–196 (KGLSVYTNSA…MGLMVILQRE (163 aa)) the chain is Lumenal. Active-site charge relay system residues include Ser-53 and His-92. Residues 101–133 (VPGKDKTKKGGKQGVEASPSSLESQKLLTKGDN) are disordered. Over residues 118–133 (SPSSLESQKLLTKGDN) the composition is skewed to polar residues. The N-linked (GlcNAc...) asparagine glycan is linked to Asn-134. Asp-138 (charge relay system) is an active-site residue. Residues 182-193 (VLLGFMGLMVIL) are C-terminal short (CTS) helix.

This sequence belongs to the peptidase S26B family. In terms of assembly, component of the signal peptidase complex (SPC) composed of a catalytic subunit SEC11 and three accessory subunits SPC1, SPC2 and SPC3. The complex induces a local thinning of the ER membrane which is used to measure the length of the signal peptide (SP) h-region of protein substrates. This ensures the selectivity of the complex towards h-regions shorter than 18-20 amino acids. SPC associates with the translocon complex.

The protein localises to the endoplasmic reticulum membrane. The enzyme catalyses Cleavage of hydrophobic, N-terminal signal or leader sequences from secreted and periplasmic proteins.. Its function is as follows. Catalytic component of the signal peptidase complex (SPC) which catalyzes the cleavage of N-terminal signal sequences from nascent proteins as they are translocated into the lumen of the endoplasmic reticulum. Specifically cleaves N-terminal signal peptides that contain a hydrophobic alpha-helix (h-region) shorter than 18-20 amino acids. The protein is Signal peptidase complex catalytic subunit SEC11 (SEC11) of Ajellomyces dermatitidis (strain ER-3 / ATCC MYA-2586) (Blastomyces dermatitidis).